The sequence spans 287 residues: Inorganic pyrophosphatase (287 aa).

Residue R79 participates in diphosphate binding. Mg(2+) is bound by residues D116, D121, and D153. Positions 244–258 (NSTLGNSDSVDSSKL) are enriched in polar residues. The segment at 244-269 (NSTLGNSDSVDSSKLASIPRGENLPP) is disordered.

It belongs to the PPase family. Mg(2+) is required as a cofactor.

It localises to the cytoplasm. It carries out the reaction diphosphate + H2O = 2 phosphate + H(+). Involved in osmoadaptation. In Emericella nidulans (strain FGSC A4 / ATCC 38163 / CBS 112.46 / NRRL 194 / M139) (Aspergillus nidulans), this protein is Inorganic pyrophosphatase (ipp1).